The following is a 145-amino-acid chain: uncharacterized protein (145 aa).

The protein belongs to the asfivirus K145R family.

It is found in the virion. This is an uncharacterized protein from Ornithodoros (relapsing fever ticks).